A 684-amino-acid chain; its full sequence is 1,4-alpha-glucan-branching enzyme (684 aa).

(1,4-alpha-D-glucosyl)n contacts are provided by Trp88 and Lys123. The active-site Nucleophile is the Asp340. Catalysis depends on Glu395, which acts as the Proton donor.

The protein belongs to the glycosyl hydrolase 13 family. GlgB subfamily.

Its subcellular location is the cytoplasm. The enzyme catalyses Transfers a segment of a (1-&gt;4)-alpha-D-glucan chain to a primary hydroxy group in a similar glucan chain.. It functions in the pathway glycan biosynthesis; glycogen biosynthesis. Glycogen-branching enzyme participates in the glycogen biosynthetic process along with glycogenin and glycogen synthase. Generates alpha-1,6-glucosidic branches from alpha-1,4-linked glucose chains, to increase solubility of the glycogen polymer. The chain is 1,4-alpha-glucan-branching enzyme (be1) from Emericella nidulans (strain FGSC A4 / ATCC 38163 / CBS 112.46 / NRRL 194 / M139) (Aspergillus nidulans).